Here is an 88-residue protein sequence, read N- to C-terminus: ATP synthase subunit c (88 aa).

A run of 2 helical transmembrane segments spans residues 10–30 (ILAASAIGAGLAMIAGLGPGI) and 68–88 (GIYSLVIALILLFANPLIRLL).

This sequence belongs to the ATPase C chain family. In terms of assembly, F-type ATPases have 2 components, F(1) - the catalytic core - and F(0) - the membrane proton channel. F(1) has five subunits: alpha(3), beta(3), gamma(1), delta(1), epsilon(1). F(0) has three main subunits: a(1), b(2) and c(10-14). The alpha and beta chains form an alternating ring which encloses part of the gamma chain. F(1) is attached to F(0) by a central stalk formed by the gamma and epsilon chains, while a peripheral stalk is formed by the delta and b chains.

It is found in the cell membrane. F(1)F(0) ATP synthase produces ATP from ADP in the presence of a proton or sodium gradient. F-type ATPases consist of two structural domains, F(1) containing the extramembraneous catalytic core and F(0) containing the membrane proton channel, linked together by a central stalk and a peripheral stalk. During catalysis, ATP synthesis in the catalytic domain of F(1) is coupled via a rotary mechanism of the central stalk subunits to proton translocation. In terms of biological role, key component of the F(0) channel; it plays a direct role in translocation across the membrane. A homomeric c-ring of between 10-14 subunits forms the central stalk rotor element with the F(1) delta and epsilon subunits. In Alkaliphilus oremlandii (strain OhILAs) (Clostridium oremlandii (strain OhILAs)), this protein is ATP synthase subunit c.